The following is a 366-amino-acid chain: tRNA/tmRNA (uracil-C(5))-methyltransferase (366 aa).

S-adenosyl-L-methionine contacts are provided by glutamine 190, tyrosine 218, asparagine 223, glutamate 239, and aspartate 299. Cysteine 324 serves as the catalytic Nucleophile. The active-site Proton acceptor is glutamate 358.

This sequence belongs to the class I-like SAM-binding methyltransferase superfamily. RNA M5U methyltransferase family. TrmA subfamily.

It catalyses the reaction uridine(54) in tRNA + S-adenosyl-L-methionine = 5-methyluridine(54) in tRNA + S-adenosyl-L-homocysteine + H(+). The enzyme catalyses uridine(341) in tmRNA + S-adenosyl-L-methionine = 5-methyluridine(341) in tmRNA + S-adenosyl-L-homocysteine + H(+). Its function is as follows. Dual-specificity methyltransferase that catalyzes the formation of 5-methyluridine at position 54 (m5U54) in all tRNAs, and that of position 341 (m5U341) in tmRNA (transfer-mRNA). In Shigella dysenteriae serotype 1 (strain Sd197), this protein is tRNA/tmRNA (uracil-C(5))-methyltransferase.